We begin with the raw amino-acid sequence, 530 residues long: uncharacterized protein (530 aa).

This is an uncharacterized protein from Leptospira interrogans serogroup Icterohaemorrhagiae serovar Lai (strain 56601).